The chain runs to 412 residues: Na(+)-translocating NADH-quinone reductase subunit B (412 aa).

3 consecutive transmembrane segments (helical) span residues 57 to 77, 127 to 147, and 163 to 183; these read MILV…NVGL, VFFL…EVLF, and SILF…ALGI. Residue Thr236 is modified to FMN phosphoryl threonine. The next 5 helical transmembrane spans lie at 270 to 290, 297 to 317, 322 to 342, 358 to 378, and 381 to 401; these read GSIG…ILFG, IVAG…VIGS, MFSM…GMMF, WSYG…NPAY, and GMML…YLVV.

The protein belongs to the NqrB/RnfD family. As to quaternary structure, composed of six subunits; NqrA, NqrB, NqrC, NqrD, NqrE and NqrF. It depends on FMN as a cofactor.

The protein resides in the cell inner membrane. It catalyses the reaction a ubiquinone + n Na(+)(in) + NADH + H(+) = a ubiquinol + n Na(+)(out) + NAD(+). Its function is as follows. NQR complex catalyzes the reduction of ubiquinone-1 to ubiquinol by two successive reactions, coupled with the transport of Na(+) ions from the cytoplasm to the periplasm. NqrA to NqrE are probably involved in the second step, the conversion of ubisemiquinone to ubiquinol. This Klebsiella pneumoniae (strain 342) protein is Na(+)-translocating NADH-quinone reductase subunit B.